The primary structure comprises 290 residues: Phycobilisome 32.3 kDa linker polypeptide, phycocyanin-associated, rod (290 aa).

The PBS-linker domain occupies 1-179; that stretch reads MPVTVAASRL…LQRGYANSDR (179 aa). Residues 236-288 form the CpcD-like domain; it reads DQVVRVEVAALSTPRYPRIRRSSRVFFVPVSRLSQKLQEIQRMGGRVASISPA.

This sequence belongs to the phycobilisome linker protein family.

It is found in the cellular thylakoid membrane. Functionally, rod linker protein, associated with phycocyanin. Linker polypeptides determine the state of aggregation and the location of the disk-shaped phycobiliprotein units within the phycobilisome and modulate their spectroscopic properties in order to mediate a directed and optimal energy transfer. This is Phycobilisome 32.3 kDa linker polypeptide, phycocyanin-associated, rod (cpcC) from Picosynechococcus sp. (strain ATCC 27264 / PCC 7002 / PR-6) (Agmenellum quadruplicatum).